The primary structure comprises 354 residues: MTELKNDRYLRALLRQPVDVTPVWMMRQAGRYLPEYNATRAQAGNFIALCKNAELACEVTLQPLRRFPLDAAILFSDILTVPDAMGLGLYFETGEGPRFTHSVTCHADIQRLPIPDPEQELGYVMDAVRTIRRSLRGDVPLIGFSGSPWTLATYMVEGGSSKAFTKIKKVMFSDPAALHLLLDKLAQSVILYLNAQIRAGAQAVMIFDTWGGVLTGRDYREFSLRYMHQIVDGLQRESEGRRVPVTLFTKGGGQWLEAMADTGCDALGLDWTCDIADARRRVGGRVALQGNMDPSLLYAPPARIEQEVETILAGFGQGEGHICNLGHGIHPDVPPKHAGVFVDAVHRLSVPYHR.

Substrate is bound by residues 27-31 (RQAGR), Asp77, Tyr154, Thr209, and His327.

Belongs to the uroporphyrinogen decarboxylase family. Homodimer.

It is found in the cytoplasm. It carries out the reaction uroporphyrinogen III + 4 H(+) = coproporphyrinogen III + 4 CO2. The protein operates within porphyrin-containing compound metabolism; protoporphyrin-IX biosynthesis; coproporphyrinogen-III from 5-aminolevulinate: step 4/4. In terms of biological role, catalyzes the decarboxylation of four acetate groups of uroporphyrinogen-III to yield coproporphyrinogen-III. The polypeptide is Uroporphyrinogen decarboxylase (Edwardsiella ictaluri (strain 93-146)).